The primary structure comprises 231 residues: Endonuclease NucS (231 aa).

Belongs to the NucS endonuclease family.

It localises to the cytoplasm. Cleaves both 3' and 5' ssDNA extremities of branched DNA structures. This Pseudarthrobacter chlorophenolicus (strain ATCC 700700 / DSM 12829 / CIP 107037 / JCM 12360 / KCTC 9906 / NCIMB 13794 / A6) (Arthrobacter chlorophenolicus) protein is Endonuclease NucS.